Reading from the N-terminus, the 387-residue chain is WD repeat-containing protein 89 (387 aa).

WD repeat units lie at residues 21-65, 68-107, 112-156, 168-208, 214-254, and 319-358; these read KEPT…VLRE, GYPG…EKPV, GYPS…QDLS, THSD…EEDA, NSIS…TDEP, and GHAA…KTFT.

This chain is WD repeat-containing protein 89 (WDR89), found in Pongo abelii (Sumatran orangutan).